We begin with the raw amino-acid sequence, 113 residues long: Large ribosomal subunit protein uL24 (113 aa).

The protein belongs to the universal ribosomal protein uL24 family. In terms of assembly, part of the 50S ribosomal subunit.

One of two assembly initiator proteins, it binds directly to the 5'-end of the 23S rRNA, where it nucleates assembly of the 50S subunit. In terms of biological role, one of the proteins that surrounds the polypeptide exit tunnel on the outside of the subunit. In Chlamydia felis (strain Fe/C-56) (Chlamydophila felis), this protein is Large ribosomal subunit protein uL24.